Here is a 221-residue protein sequence, read N- to C-terminus: MHLSSDEVILWQSGFLKLNLTIVTTWALMLLLAGGSALITRRLSTGITISRWQSMLEIIVTMAHRQISEVGLQKPEKYLPFIAALFLFIATANLCTVIPGYEPPTGSLSTTAALALSVFIAVPLFGIAESSLVGYLKTYAEPTPIMLPFNIVGELTRTMALAVRLFGNMMSGDMILVILLTISPLVFPVLMNILGLLTGMVQAYIFSILATVYIAAATRTR.

A run of 5 helical transmembrane segments spans residues 20–40 (LTIVTTWALMLLLAGGSALIT), 78–98 (YLPFIAALFLFIATANLCTVI), 108–128 (LSTTAALALSVFIAVPLFGIA), 174–194 (MILVILLTISPLVFPVLMNIL), and 196–216 (LLTGMVQAYIFSILATVYIAA).

The protein belongs to the ATPase A chain family. In terms of assembly, F-type ATPases have 2 components, CF(1) - the catalytic core - and CF(0) - the membrane proton channel. CF(1) has five subunits: alpha(3), beta(3), gamma(1), delta(1), epsilon(1). CF(0) has four main subunits: a, b, b' and c.

Its subcellular location is the cell inner membrane. In terms of biological role, key component of the proton channel; it plays a direct role in the translocation of protons across the membrane. The polypeptide is ATP synthase subunit a 1 (Chlorobaculum tepidum (strain ATCC 49652 / DSM 12025 / NBRC 103806 / TLS) (Chlorobium tepidum)).